The sequence spans 118 residues: Large ribosomal subunit protein uL23c (118 aa).

This sequence belongs to the universal ribosomal protein uL23 family. As to quaternary structure, part of the 50S ribosomal subunit.

It is found in the plastid. Its subcellular location is the chloroplast. In terms of biological role, binds to 23S rRNA. The chain is Large ribosomal subunit protein uL23c (rpl23) from Stigeoclonium helveticum (Green alga).